The following is a 308-amino-acid chain: MNSFLDIHNTDRSDLRGMIDSARRMKDARSGQPKGTPDADLPLKNRMVALIFEKPSTRTRVSFDLGVRQMGGQTMVLSGKEMQLGHGETIADTARVLSRYVDLIMIRTFEEATLLEMAEYASVPVINGLTNRTHPCQVMADVMTFEEHRGPIAGKKVVWSGDGNNVCCSMIHAAGQFGYDFTFTGPPTLDPEREALDFARAQGVQAVIERDPAKAVEGADLVVTDTWVSMHDPQSARERRHNQLRPYQVNEALMAHAKPDALFMHCLPAHRDDEATSAVMDGPNSVIFDEAENRLHAQKAIMRWCLGL.

Carbamoyl phosphate is bound by residues 56 to 59 (STRT), glutamine 83, arginine 107, and 134 to 137 (HPCQ). Residues asparagine 165, aspartate 225, and 229-230 (SM) contribute to the L-ornithine site. Carbamoyl phosphate-binding positions include 266 to 267 (CL) and arginine 294.

It belongs to the aspartate/ornithine carbamoyltransferase superfamily. OTCase family.

It localises to the cytoplasm. The catalysed reaction is carbamoyl phosphate + L-ornithine = L-citrulline + phosphate + H(+). It functions in the pathway amino-acid biosynthesis; L-arginine biosynthesis; L-arginine from L-ornithine and carbamoyl phosphate: step 1/3. Its function is as follows. Reversibly catalyzes the transfer of the carbamoyl group from carbamoyl phosphate (CP) to the N(epsilon) atom of ornithine (ORN) to produce L-citrulline. This chain is Ornithine carbamoyltransferase, found in Paracoccus denitrificans (strain Pd 1222).